A 714-amino-acid chain; its full sequence is Polyribonucleotide nucleotidyltransferase (714 aa).

Positions 493 and 499 each coordinate Mg(2+). The region spanning 559–618 is the KH domain; the sequence is PRIETTKIPADRIGELIGPGGKNIKAIQAESGADINIEEDGTVHIYAAKQEGLDRALELV. Residues 628 to 696 form the S1 motif domain; that stretch reads GELYTGKIVS…DKGRVKMSIR (69 aa).

Belongs to the polyribonucleotide nucleotidyltransferase family. The cofactor is Mg(2+).

It localises to the cytoplasm. The enzyme catalyses RNA(n+1) + phosphate = RNA(n) + a ribonucleoside 5'-diphosphate. Involved in mRNA degradation. Catalyzes the phosphorolysis of single-stranded polyribonucleotides processively in the 3'- to 5'-direction. This is Polyribonucleotide nucleotidyltransferase from Akkermansia muciniphila (strain ATCC BAA-835 / DSM 22959 / JCM 33894 / BCRC 81048 / CCUG 64013 / CIP 107961 / Muc).